The following is a 159-amino-acid chain: NAD(P)H-quinone oxidoreductase subunit J, chloroplastic (159 aa).

It belongs to the complex I 30 kDa subunit family. NDH is composed of at least 16 different subunits, 5 of which are encoded in the nucleus.

The protein resides in the plastid. The protein localises to the chloroplast thylakoid membrane. The catalysed reaction is a plastoquinone + NADH + (n+1) H(+)(in) = a plastoquinol + NAD(+) + n H(+)(out). It catalyses the reaction a plastoquinone + NADPH + (n+1) H(+)(in) = a plastoquinol + NADP(+) + n H(+)(out). NDH shuttles electrons from NAD(P)H:plastoquinone, via FMN and iron-sulfur (Fe-S) centers, to quinones in the photosynthetic chain and possibly in a chloroplast respiratory chain. The immediate electron acceptor for the enzyme in this species is believed to be plastoquinone. Couples the redox reaction to proton translocation, and thus conserves the redox energy in a proton gradient. The chain is NAD(P)H-quinone oxidoreductase subunit J, chloroplastic from Brachypodium distachyon (Purple false brome).